Consider the following 725-residue polypeptide: Polyribonucleotide nucleotidyltransferase (725 aa).

Residues aspartate 488 and aspartate 494 each coordinate Mg(2+). Residues 555-614 (PRMITMKIHPDKIREVIGKGGSTIQALTKETGTTIDIQEDGTITIASTSTDGMAEAKRRI) enclose the KH domain. An S1 motif domain is found at 624 to 692 (GKIYAGTVLK…EKGRLRLSLK (69 aa)). The segment at 702–725 (ISPIAQGDAPAAAPAAPASPDQQQ) is disordered. Low complexity predominate over residues 706-725 (AQGDAPAAAPAAPASPDQQQ).

This sequence belongs to the polyribonucleotide nucleotidyltransferase family. Mg(2+) serves as cofactor.

The protein resides in the cytoplasm. The enzyme catalyses RNA(n+1) + phosphate = RNA(n) + a ribonucleoside 5'-diphosphate. Functionally, involved in mRNA degradation. Catalyzes the phosphorolysis of single-stranded polyribonucleotides processively in the 3'- to 5'-direction. This is Polyribonucleotide nucleotidyltransferase from Cupriavidus metallidurans (strain ATCC 43123 / DSM 2839 / NBRC 102507 / CH34) (Ralstonia metallidurans).